The chain runs to 884 residues: Chondroitin sulfate synthase 3 (884 aa).

The Cytoplasmic portion of the chain corresponds to Met-1 to Arg-7. A helical; Signal-anchor for type II membrane protein membrane pass occupies residues Pro-8 to Ala-28. Topologically, residues Pro-29 to Ser-884 are lumenal. Residues Tyr-47–Val-164 are disordered. Composition is skewed to low complexity over residues Gln-60–Arg-69 and Pro-84–Pro-96. Residues Asn-155 and Asn-281 are each glycosylated (N-linked (GlcNAc...) asparagine). The segment at Ser-437–His-456 is disordered. The N-linked (GlcNAc...) asparagine glycan is linked to Asn-712. 2 residues coordinate a divalent metal cation: Asp-722 and His-836. N-linked (GlcNAc...) asparagine glycosylation occurs at Asn-880.

This sequence belongs to the chondroitin N-acetylgalactosaminyltransferase family. Co(2+) is required as a cofactor. Mn(2+) serves as cofactor. The cofactor is Cd(2+).

It localises to the golgi apparatus. The protein localises to the golgi stack membrane. The enzyme catalyses 3-O-(beta-D-GlcA-(1-&gt;3)-beta-D-GalNAc-(1-&gt;4)-beta-D-GlcA-(1-&gt;3)-beta-D-Gal-(1-&gt;3)-beta-D-Gal-(1-&gt;4)-beta-D-Xyl)-L-seryl-[protein] + UDP-N-acetyl-alpha-D-galactosamine = 3-O-(beta-D-GalNAc-(1-&gt;4)-beta-D-GlcA-(1-&gt;3)-beta-D-GalNAc-(1-&gt;4)-beta-D-GlcA-(1-&gt;3)-beta-D-Gal-(1-&gt;3)-beta-D-Gal-(1-&gt;4)-beta-D-Xyl)-L-seryl-[protein] + UDP + H(+). It carries out the reaction 3-O-{beta-D-GlcA-(1-&gt;3)-[beta-D-GalNAc-(1-&gt;4)-beta-D-GlcA-(1-&gt;3)](n)-beta-D-GalNAc-(1-&gt;4)-beta-D-GlcA-(1-&gt;3)-beta-D-Gal-(1-&gt;3)-beta-D-Gal-(1-&gt;4)-beta-D-Xyl}-L-seryl-[protein] + UDP-N-acetyl-alpha-D-galactosamine = 3-O-{[beta-D-GalNAc-(1-&gt;4)-beta-D-GlcA-(1-&gt;3)](n+1)-beta-D-GalNAc-(1-&gt;4)-beta-D-GlcA-(1-&gt;3)-beta-D-Gal-(1-&gt;3)-beta-D-Gal-(1-&gt;4)-beta-D-Xyl}-L-seryl-[protein] + UDP + H(+). The catalysed reaction is 3-O-(beta-D-GalNAc-(1-&gt;4)-beta-D-GlcA-(1-&gt;3)-beta-D-Gal-(1-&gt;3)-beta-D-Gal-(1-&gt;4)-beta-D-Xyl)-L-seryl-[protein] + UDP-alpha-D-glucuronate = 3-O-(beta-D-GlcA-(1-&gt;3)-beta-D-GalNAc-(1-&gt;4)-beta-D-GlcA-(1-&gt;3)-beta-D-Gal-(1-&gt;3)-beta-D-Gal-(1-&gt;4)-beta-D-Xyl)-L-seryl-[protein] + UDP + H(+). It catalyses the reaction 3-O-{[beta-D-GalNAc-(1-&gt;4)-beta-D-GlcA-(1-&gt;3)](n)-beta-D-GalNAc-(1-&gt;4)-beta-D-GlcA-(1-&gt;3)-beta-D-Gal-(1-&gt;3)-beta-D-Gal-(1-&gt;4)-beta-D-Xyl}-L-seryl-[protein] + UDP-alpha-D-glucuronate = 3-O-{beta-D-GlcA-(1-&gt;3)-[beta-D-GalNAc-(1-&gt;4)-beta-D-GlcA-(1-&gt;3)](n)-beta-D-GalNAc-(1-&gt;4)-beta-D-GlcA-(1-&gt;3)-beta-D-Gal-(1-&gt;3)-beta-D-Gal-(1-&gt;4)-beta-D-Xyl}-L-seryl-[protein] + UDP + H(+). Has both beta-1,3-glucuronic acid and beta-1,4-N-acetylgalactosamine transferase activity. Transfers glucuronic acid (GlcUA) from UDP-GlcUA and N-acetylgalactosamine (GalNAc) from UDP-GalNAc to the non-reducing end of the elongating chondroitin polymer. Specific activity is much reduced compared to CHSY1. This Mus musculus (Mouse) protein is Chondroitin sulfate synthase 3 (Chsy3).